An 82-amino-acid chain; its full sequence is Translational regulator CsrA (82 aa).

It belongs to the CsrA/RsmA family. As to quaternary structure, homodimer; the beta-strands of each monomer intercalate to form a hydrophobic core, while the alpha-helices form wings that extend away from the core.

The protein localises to the cytoplasm. Its function is as follows. A translational regulator that binds mRNA to regulate translation initiation and/or mRNA stability. Usually binds in the 5'-UTR at or near the Shine-Dalgarno sequence preventing ribosome-binding, thus repressing translation. Its main target seems to be the major flagellin gene, while its function is anatagonized by FliW. The chain is Translational regulator CsrA from Brachyspira hyodysenteriae (strain ATCC 49526 / WA1).